Reading from the N-terminus, the 146-residue chain is General odorant-binding protein 19a (146 aa).

Residues 1 to 22 form the signal peptide; it reads MKFHLLLVCVAISLGPIPQSEA. Disulfide bonds link Cys-40–Cys-72, Cys-68–Cys-126, and Cys-113–Cys-135.

This sequence belongs to the PBP/GOBP family. In terms of tissue distribution, expressed in adult olfactory system. Expressed exclusively in a subset of chemosensory sensilla on the third antennal segment.

It is found in the secreted. Present in the aqueous fluid surrounding olfactory sensory dendrites and are thought to aid in the capture and transport of hydrophobic odorants into and through this fluid. This is General odorant-binding protein 19a (Obp19a) from Drosophila melanogaster (Fruit fly).